The following is a 106-amino-acid chain: Large ribosomal subunit protein uL24 (106 aa).

The protein belongs to the universal ribosomal protein uL24 family. Part of the 50S ribosomal subunit.

Functionally, one of two assembly initiator proteins, it binds directly to the 5'-end of the 23S rRNA, where it nucleates assembly of the 50S subunit. In terms of biological role, one of the proteins that surrounds the polypeptide exit tunnel on the outside of the subunit. In Spiroplasma kunkelii, this protein is Large ribosomal subunit protein uL24.